A 291-amino-acid polypeptide reads, in one-letter code: Pituitary-specific positive transcription factor 1 (291 aa).

The 9aaTAD motif lies at 5-13 (AFTSADTFI). The region spanning 124–198 (MDSPEIRELE…ILSKWLEEAE (75 aa)) is the POU-specific domain. Positions 214 to 273 (KRKRRTTISIAAKDALERHFGEQNKPSSQEIMRMAEELNLEKEVVRVWFCNRRQREKRVK) form a DNA-binding region, homeobox.

Belongs to the POU transcription factor family. Class-1 subfamily. As to quaternary structure, interacts with PITX1. Interacts with LHX3. Interacts with ELK1.

The protein localises to the nucleus. Transcription factor involved in the specification of the lactotrope, somatotrope, and thyrotrope phenotypes in the developing anterior pituitary. Specifically binds to the consensus sequence 5'-TAAAT-3'. Activates growth hormone and prolactin genes. This chain is Pituitary-specific positive transcription factor 1 (POU1F1), found in Homo sapiens (Human).